We begin with the raw amino-acid sequence, 281 residues long: Fructose-bisphosphate aldolase class 1 (281 aa).

Residue Lys-191 is the Schiff-base intermediate with dihydroxyacetone-P of the active site.

This sequence belongs to the DeoC/FbaB aldolase family. As to quaternary structure, homooctamer.

It is found in the cytoplasm. The enzyme catalyses beta-D-fructose 1,6-bisphosphate = D-glyceraldehyde 3-phosphate + dihydroxyacetone phosphate. Activated by citrate. In Pyrococcus furiosus (strain ATCC 43587 / DSM 3638 / JCM 8422 / Vc1), this protein is Fructose-bisphosphate aldolase class 1 (fba).